The following is a 514-amino-acid chain: Citrate synthase 2, peroxisomal (514 aa).

Active-site residues include histidine 324, histidine 363, and aspartate 419.

Belongs to the citrate synthase family. In terms of tissue distribution, widely expressed. Expressed throughout the shoot. Expressed in flower, silique, stem, cauline leaf, young leaf, mature leaf and senescent leaf.

It localises to the peroxisome. The enzyme catalyses oxaloacetate + acetyl-CoA + H2O = citrate + CoA + H(+). Its pathway is carbohydrate metabolism; tricarboxylic acid cycle; isocitrate from oxaloacetate: step 1/2. Functionally, peroxisomal citrate synthase required for the fatty acid respiration in seedlings, citrate being exported from peroxisomes into mitochondria during respiration of triacylglycerol (TAG). Indeed, complete respiration requires the transfer of carbon in the form of citrate from the peroxisome to the mitochondria. This Arabidopsis thaliana (Mouse-ear cress) protein is Citrate synthase 2, peroxisomal (CSY2).